The primary structure comprises 309 residues: UDP-N-acetylenolpyruvoylglucosamine reductase (309 aa).

An FAD-binding PCMH-type domain is found at 33 to 198; it reads RVGGPAQVLF…TSARFRGTPA (166 aa). Arginine 178 is a catalytic residue. Serine 227 (proton donor) is an active-site residue. Glutamate 297 is a catalytic residue.

Belongs to the MurB family. Requires FAD as cofactor.

It localises to the cytoplasm. It catalyses the reaction UDP-N-acetyl-alpha-D-muramate + NADP(+) = UDP-N-acetyl-3-O-(1-carboxyvinyl)-alpha-D-glucosamine + NADPH + H(+). It functions in the pathway cell wall biogenesis; peptidoglycan biosynthesis. Its function is as follows. Cell wall formation. The chain is UDP-N-acetylenolpyruvoylglucosamine reductase from Rhodopseudomonas palustris (strain HaA2).